Reading from the N-terminus, the 232-residue chain is Putative ABC transporter ATP-binding protein VNG_2317G (232 aa).

Residues 2–231 enclose the ABC transporter domain; sequence LSVRNLVHRY…GALPDAGVRP (230 aa). 34–41 contributes to the ATP binding site; that stretch reads GANGSGKT.

It belongs to the ABC transporter superfamily.

Its subcellular location is the cell membrane. Its function is as follows. Probably part of an ABC transporter complex. Responsible for energy coupling to the transport system. This is Putative ABC transporter ATP-binding protein VNG_2317G from Halobacterium salinarum (strain ATCC 700922 / JCM 11081 / NRC-1) (Halobacterium halobium).